The sequence spans 130 residues: S-adenosylmethionine decarboxylase proenzyme (130 aa).

The Schiff-base intermediate with substrate; via pyruvic acid role is filled by S63. S63 carries the post-translational modification Pyruvic acid (Ser); by autocatalysis. H68 functions as the Proton acceptor; for processing activity in the catalytic mechanism. C83 functions as the Proton donor; for catalytic activity in the catalytic mechanism.

It belongs to the prokaryotic AdoMetDC family. Type 1 subfamily. In terms of assembly, heterotetramer of two alpha and two beta chains arranged as a dimer of alpha/beta heterodimers. Pyruvate is required as a cofactor. Is synthesized initially as an inactive proenzyme. Formation of the active enzyme involves a self-maturation process in which the active site pyruvoyl group is generated from an internal serine residue via an autocatalytic post-translational modification. Two non-identical subunits are generated from the proenzyme in this reaction, and the pyruvate is formed at the N-terminus of the alpha chain, which is derived from the carboxyl end of the proenzyme. The post-translation cleavage follows an unusual pathway, termed non-hydrolytic serinolysis, in which the side chain hydroxyl group of the serine supplies its oxygen atom to form the C-terminus of the beta chain, while the remainder of the serine residue undergoes an oxidative deamination to produce ammonia and the pyruvoyl group blocking the N-terminus of the alpha chain.

The enzyme catalyses S-adenosyl-L-methionine + H(+) = S-adenosyl 3-(methylsulfanyl)propylamine + CO2. It participates in amine and polyamine biosynthesis; S-adenosylmethioninamine biosynthesis; S-adenosylmethioninamine from S-adenosyl-L-methionine: step 1/1. In terms of biological role, catalyzes the decarboxylation of S-adenosylmethionine to S-adenosylmethioninamine (dcAdoMet), the propylamine donor required for the synthesis of the polyamines spermine and spermidine from the diamine putrescine. The sequence is that of S-adenosylmethionine decarboxylase proenzyme from Thermotoga petrophila (strain ATCC BAA-488 / DSM 13995 / JCM 10881 / RKU-1).